The chain runs to 185 residues: Acireductone dioxygenase (185 aa).

The disordered stretch occupies residues 1–23 (MSRLSIHPEGNTNATSPAEPLLE). Fe(2+) contacts are provided by His-102, His-104, Glu-108, and His-146. Ni(2+)-binding residues include His-102, His-104, Glu-108, and His-146.

This sequence belongs to the acireductone dioxygenase (ARD) family. In terms of assembly, monomer. Fe(2+) serves as cofactor. Requires Ni(2+) as cofactor.

It carries out the reaction 1,2-dihydroxy-5-(methylsulfanyl)pent-1-en-3-one + O2 = 3-(methylsulfanyl)propanoate + CO + formate + 2 H(+). The catalysed reaction is 1,2-dihydroxy-5-(methylsulfanyl)pent-1-en-3-one + O2 = 4-methylsulfanyl-2-oxobutanoate + formate + 2 H(+). It functions in the pathway amino-acid biosynthesis; L-methionine biosynthesis via salvage pathway; L-methionine from S-methyl-5-thio-alpha-D-ribose 1-phosphate: step 5/6. Its function is as follows. Catalyzes 2 different reactions between oxygen and the acireductone 1,2-dihydroxy-3-keto-5-methylthiopentene (DHK-MTPene) depending upon the metal bound in the active site. Fe-containing acireductone dioxygenase (Fe-ARD) produces formate and 2-keto-4-methylthiobutyrate (KMTB), the alpha-ketoacid precursor of methionine in the methionine recycle pathway. Ni-containing acireductone dioxygenase (Ni-ARD) produces methylthiopropionate, carbon monoxide and formate, and does not lie on the methionine recycle pathway. The chain is Acireductone dioxygenase from Prochlorococcus marinus (strain MIT 9303).